The following is a 117-amino-acid chain: MPRVKRGFKARQRRNKVLKLAKGYRGARSKLFRSATEAVDRALNYAFRDRRVKKRDFRALWITRINAAARINGISYSKLIHGLKQAKVEVDRKVMADLAVSDPRGFAEIVSLAKANA.

Belongs to the bacterial ribosomal protein bL20 family.

Functionally, binds directly to 23S ribosomal RNA and is necessary for the in vitro assembly process of the 50S ribosomal subunit. It is not involved in the protein synthesizing functions of that subunit. In Geotalea daltonii (strain DSM 22248 / JCM 15807 / FRC-32) (Geobacter daltonii), this protein is Large ribosomal subunit protein bL20.